A 142-amino-acid chain; its full sequence is Putative pre-16S rRNA nuclease (142 aa).

Belongs to the YqgF nuclease family.

Its subcellular location is the cytoplasm. Could be a nuclease involved in processing of the 5'-end of pre-16S rRNA. The chain is Putative pre-16S rRNA nuclease from Staphylococcus haemolyticus (strain JCSC1435).